The chain runs to 360 residues: Tyrosine-protein phosphatase non-receptor type 7 (360 aa).

Positions 1-37 are disordered; the sequence is MVQAHGGRSRAQPLTLSLGAAMTQPPPEKTPAKKHVR. The interval 38 to 51 is interaction with MAP kinases; it reads LQERRGSNVALMLD. Phosphoserine is present on Ser-44. Thr-66 is subject to Phosphothreonine. Phosphoserine occurs at positions 93, 110, and 143. The 254-residue stretch at 97–350 folds into the Tyrosine-protein phosphatase domain; it reads LEEEFLKIPS…QFLHHTLALY (254 aa). Substrate-binding positions include Asp-257, 291 to 297, and Gln-335; that span reads CSAGIGR. Cys-291 serves as the catalytic Phosphocysteine intermediate. Residue Cys-291 is modified to Cysteine sulfenic acid (-SOH).

The protein belongs to the protein-tyrosine phosphatase family. Non-receptor class subfamily. As to quaternary structure, monomer. Interacts with MAPK1, MAPK3 and several other MAP kinases. In terms of processing, phosphorylated on serine residues in resting T-cells. Phosphorylation increases upon exposure to stimuli that increase intracellular cAMP levels. Phosphorylation leads to dissociation of bound MAP kinases. Post-translationally, oxidized at active site cysteine. Treatment with pervanadate (vanadate and H(2)O(2)) or with antigen enhanced oxidation of active site cysteine. In terms of tissue distribution, expressed exclusively in thymus and spleen.

Its subcellular location is the cytoplasm. The protein resides in the cytoskeleton. It catalyses the reaction O-phospho-L-tyrosyl-[protein] + H2O = L-tyrosyl-[protein] + phosphate. Inhibited in cells after FCER1A triggering. In terms of biological role, protein phosphatase that acts preferentially on tyrosine-phosphorylated MAPK1. Plays a role in the regulation of T and B-lymphocyte development and signal transduction. This is Tyrosine-protein phosphatase non-receptor type 7 (PTPN7) from Homo sapiens (Human).